We begin with the raw amino-acid sequence, 80 residues long: MKKDIHPDYRPVVFMDTTTGYQFLSGSTKHSNETVEFEGETYPLIRVEISSDSHPFYTGRQKFTQADGRVDRFNKKYGLK.

Belongs to the bacterial ribosomal protein bL31 family. Type B subfamily. Part of the 50S ribosomal subunit.

The protein is Large ribosomal subunit protein bL31B of Streptococcus thermophilus (strain CNRZ 1066).